Consider the following 613-residue polypeptide: RUN domain-containing protein 1 (613 aa).

The disordered stretch occupies residues 15–36; it reads AAVGPKAKDEEEEEEEPLPPCE. Position 54 is a phosphothreonine (threonine 54). Positions 57 to 69 are enriched in low complexity; that stretch reads LEEATAEEPGAAP. Disordered regions lie at residues 57–79, 140–177, and 305–330; these read LEEATAEEPGAAPGSPPDSPGRT, YEGPGDPASDEGDGLPGDRPWLRGEDQSEQEKQERLET, and GKTGNGCSRTGSSRTPPGNSKTKAED. A phosphoserine mark is found at serine 71 and serine 75. A compositionally biased stretch (basic and acidic residues) spans 159–177; it reads PWLRGEDQSEQEKQERLET. Residues 160-235 adopt a coiled-coil conformation; that stretch reads WLRGEDQSEQ…IKKLDMNLNE (76 aa). Positions 309 to 325 are enriched in polar residues; sequence NGCSRTGSSRTPPGNSK. Residues 421–602 form the RUN domain; that stretch reads ELTMAVRKEL…LKFSLPVDLA (182 aa). Serine 497 is modified (phosphoserine).

Functionally, may play a role as p53/TP53 inhibitor and thus may have oncogenic activity. The polypeptide is RUN domain-containing protein 1 (RUNDC1) (Homo sapiens (Human)).